The primary structure comprises 230 residues: Interleukin-22 receptor subunit alpha-2 (230 aa).

An N-terminal signal peptide occupies residues 1–20; that stretch reads MMPKHCLLGLLIILLSSATE. Fibronectin type-III domains follow at residues 29-128 and 129-230; these read TPQK…TKLD and PPVV…VHIP. 2 cysteine pairs are disulfide-bonded: Cys77-Cys85 and Cys205-Cys226.

It belongs to the type II cytokine receptor family. Highly expressed in lymph nodes and at lower levels in lung, spleen, and thymus. Not expressed in kidney, liver and heart.

It localises to the secreted. Functionally, receptor for IL22. Binds to IL22, prevents interaction with the functional IL-22R complex and blocks the activity of IL22 (in vitro). May play an important role as an IL22 antagonist in the regulation of inflammatory responses. This is Interleukin-22 receptor subunit alpha-2 (Il22ra2) from Mus musculus (Mouse).